An 882-amino-acid polypeptide reads, in one-letter code: Valine--tRNA ligase (882 aa).

The 'HIGH' region signature appears at P45–H55. The 'KMSKS' region signature appears at K525–S529. K528 is an ATP binding site. Residues E812–A881 adopt a coiled-coil conformation.

It belongs to the class-I aminoacyl-tRNA synthetase family. ValS type 1 subfamily. As to quaternary structure, monomer.

It is found in the cytoplasm. The catalysed reaction is tRNA(Val) + L-valine + ATP = L-valyl-tRNA(Val) + AMP + diphosphate. In terms of biological role, catalyzes the attachment of valine to tRNA(Val). As ValRS can inadvertently accommodate and process structurally similar amino acids such as threonine, to avoid such errors, it has a 'posttransfer' editing activity that hydrolyzes mischarged Thr-tRNA(Val) in a tRNA-dependent manner. This Leptospira interrogans serogroup Icterohaemorrhagiae serovar Lai (strain 56601) protein is Valine--tRNA ligase.